Reading from the N-terminus, the 148-residue chain is UPF0260 protein KPK_1978 (148 aa).

Belongs to the UPF0260 family.

This Klebsiella pneumoniae (strain 342) protein is UPF0260 protein KPK_1978.